A 504-amino-acid polypeptide reads, in one-letter code: ADP,ATP carrier protein 3 (504 aa).

Helical transmembrane passes span 23-43 (LKLF…FGAL), 59-79 (IISF…TILY), 90-110 (YVFY…AYII), 146-166 (YGLM…LMFW), 183-203 (PVLG…LVFF), 230-250 (EMLQ…MLLF), 296-316 (IALL…PWKA), 329-349 (VHFM…FMII), 364-384 (LLTP…IIFI), 386-406 (EIGS…VGAI), 449-469 (FGKS…PTAT), and 473-493 (IIIY…WDVV).

The protein belongs to the ADP/ATP translocase tlc family.

The protein localises to the cell membrane. Functionally, provides the rickettsial cell with host ATP in exchange for rickettsial ADP. This is an obligate exchange system. This energy acquiring activity is an important component of rickettsial parasitism. The chain is ADP,ATP carrier protein 3 (tlcC) from Rickettsia bellii (strain RML369-C).